We begin with the raw amino-acid sequence, 264 residues long: Transmembrane protein 41A (264 aa).

The signal sequence occupies residues 1–17 (MRPLLGLLLVFAGCTFA). A run of 5 helical transmembrane segments spans residues 67–87 (AYVF…AIPG), 100–122 (GPWL…CYLL), 153–173 (LFFF…FLNL), 175–195 (APIL…GLIP), and 219–239 (WDTV…GTLI). The segment at 96–207 (GALFGPWLGL…FICVQTGSIL (112 aa)) is VTT domain. Asn-250 carries an N-linked (GlcNAc...) asparagine glycan.

It belongs to the TMEM41 family.

It localises to the membrane. This chain is Transmembrane protein 41A (TMEM41A), found in Homo sapiens (Human).